The sequence spans 76 residues: Conotoxin Cal5a L1 (76 aa).

The signal sequence occupies residues 1–22 (MRFYIGLMAALMLTSILRTDSA). Residues 23-42 (SVDQTGAEGGLALIERVIRQ) constitute a propeptide that is removed on maturation. Residue Pro-50 is modified to 4-hydroxyproline. The residue at position 58 (Pro-58) is a 4-hydroxyproline; in form cal5a, and form cal5b. The residue at position 62 (Pro-62) is a 4-hydroxyproline; in form cal5a, form cal5b, and form cal5c. Residue Pro-64 is modified to 4-hydroxyproline; in form cal5a, form cal5b, form cal5c, and form cal5d.

Contains 2 disulfide bonds that can be either 'C1-C3, C2-C4' or 'C1-C4, C2-C3', since these disulfide connectivities have been observed for conotoxins with cysteine framework V (for examples, see AC P0DQQ7 and AC P81755). In terms of processing, five different peptides have been described after total venom examination by HPLC-MS. Cal5a is the longest. Cal5b-Cal5e are identical in length but are differentially hydroxylated. It is possible that hydroxylation and proteolysis at position 53 are incomplete in some of these peptides. In terms of tissue distribution, expressed by the venom duct.

It localises to the secreted. Its function is as follows. Probable neurotoxin with unknown target. Possibly targets ion channels. This chain is Conotoxin Cal5a L1, found in Californiconus californicus (California cone).